A 387-amino-acid chain; its full sequence is Protein ERD1 homolog 2 (387 aa).

8 helical membrane-spanning segments follow: residues 20 to 40 (IGLLVIVGTWLWSVCYHLIYI), 92 to 112 (AGYCFAAILSISWATGFILFL), 126 to 146 (PIYPLLWVITAFILIVFPFPW), 177 to 197 (FIVSEIFTSYAKALGDFYIFG), 217 to 237 (GTFFVPLAMAYPFIVAILQCL), 252 to 272 (LLSALKHATALPVIYLSAIIH), 285 to 305 (GYLFWLWILSALLSSAYTFLW), and 326 to 346 (FPMFIYAIGCFINFILRVTWS). The 176-residue stretch at 212 to 387 (DLKCDGTFFV…LFFHLDAISS (176 aa)) folds into the EXS domain.

It belongs to the ERD1 family.

It localises to the membrane. The protein is Protein ERD1 homolog 2 of Schizosaccharomyces pombe (strain 972 / ATCC 24843) (Fission yeast).